A 225-amino-acid polypeptide reads, in one-letter code: Riboflavin kinase (225 aa).

A unknown region spans residues 1–89 (MPDIKYLKKL…SRIFSPDLDI (89 aa)). The interval 90–225 (LELEGKVLKG…LKKQGTENQK (136 aa)) is riboflavin kinase. A CDP-binding site is contributed by 99–104 (GLGEGQ). Mg(2+) contacts are provided by Thr-128 and Asn-130. FMN contacts are provided by Thr-185 and Glu-193. 198 to 201 (IKLR) lines the CDP pocket.

The protein belongs to the archaeal riboflavin kinase family. The cofactor is Mg(2+).

The enzyme catalyses riboflavin + CTP = CDP + FMN + H(+). It participates in cofactor biosynthesis; FMN biosynthesis; FMN from riboflavin (CTP route): step 1/1. Functionally, catalyzes the CTP-dependent phosphorylation of riboflavin (vitamin B2) to form flavin mononucleotide (FMN). In Methanosarcina barkeri (strain Fusaro / DSM 804), this protein is Riboflavin kinase (ribK).